A 359-amino-acid polypeptide reads, in one-letter code: RNA 3'-terminal phosphate cyclase (359 aa).

ATP contacts are provided by residues glutamine 100 and 291 to 294 (HASD). The active-site Tele-AMP-histidine intermediate is the histidine 317.

Belongs to the RNA 3'-terminal cyclase family. Type 1 subfamily.

The protein localises to the cytoplasm. The enzyme catalyses a 3'-end 3'-phospho-ribonucleotide-RNA + ATP = a 3'-end 2',3'-cyclophospho-ribonucleotide-RNA + AMP + diphosphate. In terms of biological role, catalyzes the conversion of 3'-phosphate to a 2',3'-cyclic phosphodiester at the end of RNA. The mechanism of action of the enzyme occurs in 3 steps: (A) adenylation of the enzyme by ATP; (B) transfer of adenylate to an RNA-N3'P to produce RNA-N3'PP5'A; (C) and attack of the adjacent 2'-hydroxyl on the 3'-phosphorus in the diester linkage to produce the cyclic end product. The biological role of this enzyme is unknown but it is likely to function in some aspects of cellular RNA processing. The chain is RNA 3'-terminal phosphate cyclase from Hyperthermus butylicus (strain DSM 5456 / JCM 9403 / PLM1-5).